The sequence spans 325 residues: Quinolinate synthase (325 aa).

The iminosuccinate site is built by His-41 and Ser-58. Residue Cys-103 participates in [4Fe-4S] cluster binding. Iminosuccinate is bound by residues 129–131 and Ser-146; that span reads YIN. Position 189 (Cys-189) interacts with [4Fe-4S] cluster. Iminosuccinate-binding positions include 215-217 and Thr-232; that span reads HPE. Cys-282 is a [4Fe-4S] cluster binding site.

It belongs to the quinolinate synthase family. Type 2 subfamily. [4Fe-4S] cluster is required as a cofactor.

Its subcellular location is the cytoplasm. The enzyme catalyses iminosuccinate + dihydroxyacetone phosphate = quinolinate + phosphate + 2 H2O + H(+). Its pathway is cofactor biosynthesis; NAD(+) biosynthesis; quinolinate from iminoaspartate: step 1/1. Catalyzes the condensation of iminoaspartate with dihydroxyacetone phosphate to form quinolinate. This chain is Quinolinate synthase, found in Rippkaea orientalis (strain PCC 8801 / RF-1) (Cyanothece sp. (strain PCC 8801)).